Consider the following 51-residue polypeptide: Ovomucoid (51 aa).

The region spanning 3–51 is the Kazal-like domain; that stretch reads VDCSGYPKPACTLEYFPLCGSDNQTYANKCTFCNAVVEKNVTLNHLGEC. 3 disulfide bridges follow: cysteine 5–cysteine 35, cysteine 13–cysteine 32, and cysteine 21–cysteine 51. N-linked (GlcNAc...) asparagine glycosylation occurs at asparagine 42.

Its subcellular location is the secreted. The sequence is that of Ovomucoid from Nothoprocta perdicaria (Chilean tinamou).